We begin with the raw amino-acid sequence, 209 residues long: Phosphopantothenoylcysteine decarboxylase (209 aa).

FMN contacts are provided by residues 28–30 (GSV) and 53–55 (TKS). His-90 acts as the Proton donor in catalysis. Residues 106–109 (SANT) and Ala-140 each bind FMN. 3 residues coordinate N-[(R)-4-phosphopantothenoyl]-L-cysteine: Asn-142, Arg-172, and Ala-174. Cys-175 functions as the Proton donor in the catalytic mechanism. Met-183 contacts N-[(R)-4-phosphopantothenoyl]-L-cysteine.

It belongs to the HFCD (homooligomeric flavin containing Cys decarboxylase) superfamily. In terms of assembly, homotrimer. The cofactor is FMN. In terms of tissue distribution, expressed in roots, shoots, leaves, flowers, developing siliques and seeds with highest expression in seed embryos and phloem.

It catalyses the reaction N-[(R)-4-phosphopantothenoyl]-L-cysteine + H(+) = (R)-4'-phosphopantetheine + CO2. It participates in cofactor biosynthesis; coenzyme A biosynthesis; CoA from (R)-pantothenate: step 3/5. Involved in plant growth, and salt and osmotic tolerance. Catalyzes the decarboxylation of 4'-phosphopantothenoylcysteine to 4'-phosphopantetheine, a key step in coenzyme A biosynthesis. The enzyme is also able to decarboxylate pantothenoylcysteine to pantothenoylcysteamine. The chain is Phosphopantothenoylcysteine decarboxylase from Arabidopsis thaliana (Mouse-ear cress).